The primary structure comprises 83 residues: U5-theraphotoxin-Hs1b 1 (83 aa).

The first 21 residues, 1 to 21 (MKTSMFLTLTGLVLLFVVCYA), serve as a signal peptide directing secretion. Positions 22–49 (SESEEKEFPKELLSSIFAADSDFKEEER) are excised as a propeptide. 3 disulfides stabilise this stretch: Cys-51–Cys-63, Cys-56–Cys-68, and Cys-62–Cys-75.

This sequence belongs to the neurotoxin 10 (Hwtx-1) family. 51 (Hntx-8) subfamily. Hntx-8 sub-subfamily. Expressed by the venom gland.

It is found in the secreted. Its function is as follows. Weakly inhibits 5HT3A receptors and Kv1.3/KCNA3 voltage-gated potassium channels. Agglutinates erythrocytes. The protein is U5-theraphotoxin-Hs1b 1 of Cyriopagopus schmidti (Chinese bird spider).